The sequence spans 337 residues: o-succinylbenzoate synthase (337 aa).

K142 (proton donor) is an active-site residue. Mg(2+) contacts are provided by D170, E199, and D222. The active-site Proton acceptor is the K248.

It belongs to the mandelate racemase/muconate lactonizing enzyme family. MenC type 1 subfamily. A divalent metal cation is required as a cofactor.

It catalyses the reaction (1R,6R)-6-hydroxy-2-succinyl-cyclohexa-2,4-diene-1-carboxylate = 2-succinylbenzoate + H2O. It participates in quinol/quinone metabolism; 1,4-dihydroxy-2-naphthoate biosynthesis; 1,4-dihydroxy-2-naphthoate from chorismate: step 4/7. It functions in the pathway quinol/quinone metabolism; menaquinone biosynthesis. Its function is as follows. Converts 2-succinyl-6-hydroxy-2,4-cyclohexadiene-1-carboxylate (SHCHC) to 2-succinylbenzoate (OSB). This chain is o-succinylbenzoate synthase, found in Pasteurella multocida (strain Pm70).